The following is a 636-amino-acid chain: Amylosucrase (636 aa).

Substrate contacts are provided by D152, H195, Q262, and R292. The active-site Nucleophile is D294. The Proton donor role is filled by E336. Positions 400, 401, and 517 each coordinate substrate.

This sequence belongs to the glycosyl hydrolase 13 family. Monomer.

It localises to the secreted. It catalyses the reaction [(1-&gt;4)-alpha-D-glucosyl](n) + sucrose = [(1-&gt;4)-alpha-D-glucosyl](n+1) + D-fructose. Amylosucrase favors hydrolysis at low sucrose concentrations, and polymerization at high sucrose concentrations. Competitively inhibited by fructose. Catalyzes the synthesis of alpha-glucan from sucrose. Catalyzes, in addition, sucrose hydrolysis, maltose and maltotriose synthesis by successive transfers of the glucosyl moiety of sucrose onto the released glucose, and finally turanose and trehalulose synthesis, these two sucrose isomers being obtained by glucosyl transfer onto fructose. This Neisseria polysaccharea protein is Amylosucrase (ams).